Consider the following 118-residue polypeptide: Small ribosomal subunit protein uS19c (118 aa).

Residues 92–118 (KKSSKKVTKNKKSIKKNIKTTSKKFKK) form a disordered region.

It belongs to the universal ribosomal protein uS19 family.

The protein resides in the plastid. Protein S19 forms a complex with S13 that binds strongly to the 16S ribosomal RNA. This is Small ribosomal subunit protein uS19c (rps19) from Euglena longa (Euglenophycean alga).